The chain runs to 373 residues: Probable tRNA sulfurtransferase (373 aa).

The THUMP domain maps to 54 to 158 (NKNIEELSKV…NDVAYFYHKI (105 aa)). Residues 176-177 (LF), 201-202 (NF), lysine 256, glycine 278, and glutamine 287 contribute to the ATP site.

This sequence belongs to the ThiI family.

The protein localises to the cytoplasm. The enzyme catalyses [ThiI sulfur-carrier protein]-S-sulfanyl-L-cysteine + a uridine in tRNA + 2 reduced [2Fe-2S]-[ferredoxin] + ATP + H(+) = [ThiI sulfur-carrier protein]-L-cysteine + a 4-thiouridine in tRNA + 2 oxidized [2Fe-2S]-[ferredoxin] + AMP + diphosphate. The catalysed reaction is [ThiS sulfur-carrier protein]-C-terminal Gly-Gly-AMP + S-sulfanyl-L-cysteinyl-[cysteine desulfurase] + AH2 = [ThiS sulfur-carrier protein]-C-terminal-Gly-aminoethanethioate + L-cysteinyl-[cysteine desulfurase] + A + AMP + 2 H(+). Its pathway is cofactor biosynthesis; thiamine diphosphate biosynthesis. In terms of biological role, catalyzes the ATP-dependent transfer of a sulfur to tRNA to produce 4-thiouridine in position 8 of tRNAs, which functions as a near-UV photosensor. Also catalyzes the transfer of sulfur to the sulfur carrier protein ThiS, forming ThiS-thiocarboxylate. This is a step in the synthesis of thiazole, in the thiamine biosynthesis pathway. The sulfur is donated as persulfide by IscS. The sequence is that of Probable tRNA sulfurtransferase from Saccharolobus islandicus (strain M.14.25 / Kamchatka #1) (Sulfolobus islandicus).